The chain runs to 462 residues: Cysteine--tRNA ligase (462 aa).

Residue Cys-27 participates in Zn(2+) binding. The short motif at 29-39 (PTVYNYIHVGN) is the 'HIGH' region element. Zn(2+) is bound by residues Cys-209, His-234, and Glu-238. The 'KMSKS' region signature appears at 266-270 (KMSKS). Lys-269 is an ATP binding site.

This sequence belongs to the class-I aminoacyl-tRNA synthetase family. In terms of assembly, monomer. Zn(2+) serves as cofactor.

The protein localises to the cytoplasm. It carries out the reaction tRNA(Cys) + L-cysteine + ATP = L-cysteinyl-tRNA(Cys) + AMP + diphosphate. This Finegoldia magna (strain ATCC 29328 / DSM 20472 / WAL 2508) (Peptostreptococcus magnus) protein is Cysteine--tRNA ligase.